The primary structure comprises 344 residues: Pre-mRNA polyadenylation factor fip1 (344 aa).

2 disordered regions span residues Met-1–Ala-99 and Asn-230–Tyr-344. Polar residues predominate over residues Val-28–Gln-38. The span at Ala-39–Phe-50 shows a compositional bias: acidic residues. The span at Gln-80–Glu-92 shows a compositional bias: basic and acidic residues. Residues Ser-243–Ser-258 show a composition bias toward low complexity. The segment covering Asn-271–Ala-301 has biased composition (polar residues). Residues Ser-302–Ser-317 show a composition bias toward low complexity.

It belongs to the FIP1 family.

It is found in the nucleus. Functionally, pre-mRNA polyadenylation factor that directly interacts with poly(A) polymerase. In Schizosaccharomyces pombe (strain 972 / ATCC 24843) (Fission yeast), this protein is Pre-mRNA polyadenylation factor fip1.